The chain runs to 307 residues: Probable porphobilinogen deaminase (307 aa).

Cys-240 bears the S-(dipyrrolylmethanemethyl)cysteine mark.

This sequence belongs to the HMBS family. The cofactor is dipyrromethane.

It catalyses the reaction 4 porphobilinogen + H2O = hydroxymethylbilane + 4 NH4(+). It participates in porphyrin-containing compound metabolism; protoporphyrin-IX biosynthesis; coproporphyrinogen-III from 5-aminolevulinate: step 2/4. Its function is as follows. Tetrapolymerization of the monopyrrole PBG into the hydroxymethylbilane pre-uroporphyrinogen in several discrete steps. The chain is Probable porphobilinogen deaminase (hemC) from Aeropyrum pernix (strain ATCC 700893 / DSM 11879 / JCM 9820 / NBRC 100138 / K1).